Consider the following 624-residue polypeptide: MLLSEVLQVLRGAGKVGAAFTSTQGEQLRLMACNSTFGAGMKAAAEAVEGVMGTVMGGGDMTSKTDEFAGIEKWEEMDLDEAAKWSVASEMPPDFSSKDGRGETSETPVGAATGTIKGAGWPAQNTRFLHVSASQHHFRFVHDSIVARLSPEDIQRAREAKQNIARPVRQKLNERAKERKVPATRISRLANFGGLAVGLGIGAIAEVAKQSFGGKRSEVGALLDSPLLSEANAERIVNTLCKVRGAALKIGQMLSIQDNSFINPQLQKIFERVRQSADFMPAWQMHKVLEEELGSGWREKLSSIEEKPFAAASIGQVHHGVLPGGKEIAMKIQYPGVAESIHSDINNLMSVLKMSVVLPDGLFADSSLEVLQRELAWECDYEREAKCAKRFRNLLKGDPVFVVPEVFDELSARRVITMELVNGVPLDRCVDLDQETRNEICFNILQLCLRELFEFRFMQTDPNWSNFFYNSEQNKIFLLDFGACRDYPELFTDHYIEVVHAASVGDRATVLKKSKDLKFLTGFEAKAFEDAHVEAVMILGEAFASAEAFDFGTQSTTQRIQSLIPVMLRHRLTPPPEESYSLHRKMAGSFLICSKLKARFSCRNMFLDVYNAYKRQQQERRSQV.

The tract at residues 90–117 (EMPPDFSSKDGRGETSETPVGAATGTIK) is disordered. The chain crosses the membrane as a helical span at residues 189 to 205 (LANFGGLAVGLGIGAIA). The KxGQ motif motif lies at 249–252 (KIGQ). Residues 285–517 (MHKVLEEELG…ATVLKKSKDL (233 aa)) form the Protein kinase domain. An AAAS motif motif is present at residues 310-313 (AAAS). ATP-binding positions include serine 313, lysine 331, and 418-421 (MELV). Catalysis depends on aspartate 461, which acts as the Proton acceptor. Asparagine 466 and aspartate 480 together coordinate ATP.

The protein belongs to the protein kinase superfamily. ADCK protein kinase family. Homodimer; homodimerizes via its transmembrane region. Interacts with the multi-subunit COQ enzyme complex.

Its subcellular location is the mitochondrion membrane. The protein localises to the cytoplasm. It is found in the cytosol. It localises to the cell membrane. It functions in the pathway cofactor biosynthesis; ubiquinone biosynthesis. Its function is as follows. Atypical kinase involved in the biosynthesis of coenzyme Q, also named ubiquinone, an essential lipid-soluble electron transporter for aerobic cellular respiration. Its substrate specificity is still unclear: may act as a protein kinase that mediates phosphorylation of COQ3. According to other reports, acts as a small molecule kinase, possibly a lipid kinase that phosphorylates a prenyl lipid in the ubiquinone biosynthesis pathway, as suggested by its ability to bind coenzyme Q lipid intermediates. However, the small molecule kinase activity was not confirmed by another publication. Required for podocyte migration. This is Atypical kinase COQ8B, mitochondrial from Danio rerio (Zebrafish).